Here is a 662-residue protein sequence, read N- to C-terminus: Protein transport Sec1b (662 aa).

Belongs to the STXBP/unc-18/SEC1 family.

Its function is as follows. Involved in the vesicle trafficking. Binds syntaxins. This is Protein transport Sec1b (SEC1B) from Arabidopsis thaliana (Mouse-ear cress).